A 1361-amino-acid polypeptide reads, in one-letter code: DNA-directed RNA polymerase subunit beta (1361 aa).

This sequence belongs to the RNA polymerase beta chain family. As to quaternary structure, the RNAP catalytic core consists of 2 alpha, 1 beta, 1 beta' and 1 omega subunit. When a sigma factor is associated with the core the holoenzyme is formed, which can initiate transcription.

The enzyme catalyses RNA(n) + a ribonucleoside 5'-triphosphate = RNA(n+1) + diphosphate. Its function is as follows. DNA-dependent RNA polymerase catalyzes the transcription of DNA into RNA using the four ribonucleoside triphosphates as substrates. The chain is DNA-directed RNA polymerase subunit beta from Cellvibrio japonicus (strain Ueda107) (Pseudomonas fluorescens subsp. cellulosa).